Here is a 24-residue protein sequence, read N- to C-terminus: Humanin-like 6 (24 aa).

It belongs to the humanin family. Expressed in skeletal muscle and testis.

Its subcellular location is the secreted. The protein localises to the cytoplasm. In terms of biological role, plays a role as a neuroprotective and antiapoptotic factor. In Homo sapiens (Human), this protein is Humanin-like 6.